The sequence spans 886 residues: Putative respiratory burst oxidase homolog protein H (886 aa).

Disordered stretches follow at residues 1 to 46 (MKSN…KKNA) and 64 to 103 (WRKS…TTSS). Residues 1–316 (MKSNTPTEDS…AELMHENWKK (316 aa)) lie on the Cytoplasmic side of the membrane. The segment covering 64–78 (WRKSGNLGSPSTRKS) has biased composition (polar residues). EF-hand-like stretches follow at residues 137–145 (SVDGKLPKE) and 171–183 (RQIE…DKEQ). 2 consecutive EF-hand domains span residues 195 to 230 (DLDC…SASA) and 239 to 274 (NAAA…MVTN). Positions 208, 210, 212, 214, and 219 each coordinate Ca(2+). Phosphoserine is present on Ser283. A helical transmembrane segment spans residues 317 to 337 (LWVLALWAIINVYLFMWKYEE). The Extracellular segment spans residues 338–404 (FMRNPLYNIT…INFHKVIAYM (67 aa)). In terms of domain architecture, Ferric oxidoreductase spans 355–512 (KGAAETLKLN…LLVLAYILLI (158 aa)). Residues 405–421 (IAFQALLHTALHIFCNY) form a helical membrane-spanning segment. Residues 422-456 (PRLSSCSYDVFLTYAGAALGNTQPSYLGLMLTSVS) lie on the Cytoplasmic side of the membrane. The helical transmembrane segment at 457 to 477 (ITGVLMIFFMGFSFTLAMHYF) threads the bilayer. Residues 478 to 499 (RRNIVKLPKPFNVLAGFNAFWY) lie on the Extracellular side of the membrane. A helical transmembrane segment spans residues 500-520 (AHHLLVLAYILLIIHGYYLII). Over 521–528 (EKPWYQKT) the chain is Cytoplasmic. The helical transmembrane segment at 529–546 (TWMYLAVPMLFYASERLF) threads the bilayer. Residues 547–688 (SRLLQEHSHR…PYGAPAQNYQ (142 aa)) lie on the Extracellular side of the membrane. The FAD-binding FR-type domain occupies 552–686 (EHSHRVNVIK…KGPYGAPAQN (135 aa)). The helical transmembrane segment at 689 to 709 (KFDILLLVGLGIGATPFISIL) threads the bilayer. Residues 710–886 (KDMLNHLKPG…TRFTFHKENF (177 aa)) are Cytoplasmic-facing.

It belongs to the RBOH (TC 5.B.1.3) family. As to quaternary structure, monomer and homodimer.

The protein resides in the membrane. Calcium-dependent NADPH oxidase that generates superoxide. This is Putative respiratory burst oxidase homolog protein H (RBOHH) from Arabidopsis thaliana (Mouse-ear cress).